A 507-amino-acid polypeptide reads, in one-letter code: Myocyte-specific enhancer factor 2D (507 aa).

The MADS-box domain maps to 3 to 57 (RKKIQIQRITDERNRQVTFTKRKFGLMKKAYELSVLCDCEIALIIFNHSNKLFQY). The mef2-type DNA-binding region spans 58-86 (ASTDMDKVLLKYTEYNEPHESRTNADIIE). A phosphoserine mark is found at Ser98, Ser106, Ser110, Ser121, and Ser180. The tract at residues 174-207 (TDPRLLSPQQPALQRNSVSPGLPQRPASAGAMLG) is disordered. Polar residues predominate over residues 180–192 (SPQQPALQRNSVS). Ser190 is modified (phosphoserine; by PKA). Ser231 carries the post-translational modification Phosphoserine. Disordered stretches follow at residues 244-267 (NKVI…PSRK), 357-392 (WQQP…QQPH), and 423-507 (SIKS…WTLK). The residue at position 245 (Lys245) is an N6-acetyllysine. At Ser251 the chain carries Phosphoserine. A compositionally biased stretch (pro residues) spans 363-389 (PQQPQPPQPPQSQPQPPQPQPQQPPQQ). At Lys425 the chain carries N6-acetyllysine; alternate. A Glycyl lysine isopeptide (Lys-Gly) (interchain with G-Cter in SUMO); alternate cross-link involves residue Lys425. Ser430 is subject to Phosphoserine.

Forms a complex with class II HDACs in undifferentiating cells. On myogenic differentiation, HDACs are released into the cytoplasm allowing MEF2s to interact with other proteins for activation. Interacts with HDAC4 (in undifferentiating cells); the interaction translocates MEF2D to nuclear dots. Forms a heterodimer with MEF2A. Interacts with MAPK7; the interaction phosphorylates but does not activate MEF2D. Interacts with MYOG. Interacts with CCAR2 and HDAC3. Post-translationally, phosphorylated on Ser-430 by CDK5 is required for Lys-425 sumoylation and inhibits transcriptional activity. In neurons, enhanced CDK5 activity induced by neurotoxins promotes caspase 3-mediated cleavage leading to neuron apoptosis. Phosphorylation on Ser-180 can be enhanced by EGF. Phosphorylated and activated by CaMK4. In terms of processing, acetylated on Lys-425 by CREBBP. Acetylated by EP300. Deacetylated by SIRT1 and HDAC3. Sumoylated on Lys-425 with SUMO2 but not SUMO1; which inhibits transcriptional activity and myogenic activity. Desumoylated by SENP3.

It is found in the nucleus. Its function is as follows. Transcriptional activator which binds specifically to the MEF2 element, 5'-YTA[AT](4)TAR-3', found in numerous muscle-specific, growth factor- and stress-induced genes. Mediates cellular functions not only in skeletal and cardiac muscle development, but also in neuronal differentiation and survival. Plays diverse roles in the control of cell growth, survival and apoptosis via p38 MAPK signaling in muscle-specific and/or growth factor-related transcription. Plays a critical role in the regulation of neuronal apoptosis. The polypeptide is Myocyte-specific enhancer factor 2D (Mef2d) (Rattus norvegicus (Rat)).